Here is a 340-residue protein sequence, read N- to C-terminus: Galactoside alpha-(1,2)-fucosyltransferase 2 (340 aa).

Residues 1–7 lie on the Cytoplasmic side of the membrane; that stretch reads MLSMQAS. Residues 8–28 traverse the membrane as a helical; Signal-anchor for type II membrane protein segment; it reads FFFPTGPFILFVFTASTIFHL. Residues 29–340 lie on the Lumenal side of the membrane; the sequence is QQRMVKIQPT…EADLSPLLKH (312 aa). Asparagine 185, asparagine 251, asparagine 279, and asparagine 305 each carry an N-linked (GlcNAc...) asparagine glycan.

The protein resides in the golgi apparatus. Its subcellular location is the golgi stack membrane. It catalyses the reaction a beta-D-galactosyl-(1-&gt;3)-N-acetyl-beta-D-glucosaminyl derivative + GDP-beta-L-fucose = an alpha-L-Fuc-(1-&gt;2)-beta-D-Gal-(1-&gt;3)-beta-D-GlcNAc derivative + GDP + H(+). The catalysed reaction is a beta-D-galactosyl-(1-&gt;4)-N-acetyl-beta-D-glucosaminyl derivative + GDP-beta-L-fucose = an alpha-L-Fuc-(1-&gt;2)-beta-D-Gal-(1-&gt;4)-beta-D-GlcNAc derivative + GDP + H(+). The enzyme catalyses a neolactoside nLc4Cer + GDP-beta-L-fucose = a neolactoside IV(2)-alpha-Fuc-nLc4Cer + GDP + H(+). It carries out the reaction a neolactoside nLc4Cer(d18:1(4E)) + GDP-beta-L-fucose = a neolactoside IV(2)-alpha-Fuc-nLc4Cer(d18:1(4E)) + GDP + H(+). It catalyses the reaction a ganglioside GM1 + GDP-beta-L-fucose = a ganglioside Fuc-GM1 + GDP + H(+). The catalysed reaction is a ganglioside GA1 + GDP-beta-L-fucose = a ganglioside Fuc-GA1 + GDP + H(+). The enzyme catalyses Lc4Cer + GDP-beta-L-fucose = alpha-L-fucosyl-(1-&gt;2)-beta-D-galactosyl-(1-&gt;3)-N-acetyl-beta-D-glucosaminyl-(1-&gt;3)-beta-D-galactosyl-(1-&gt;4)-beta-D-glucosyl-(1&lt;-&gt;1')-ceramide + GDP + H(+). It carries out the reaction a beta-D-Gal-(1-&gt;3)-beta-D-GlcNAc-(1-&gt;3)-beta-D-Gal-(1-&gt;4)-beta-D-Glc-(1&lt;-&gt;1')-Cer(d18:1(4E)) + GDP-beta-L-fucose = alpha-L-fucosyl-(1-&gt;2)- beta-D-galactosyl-(1-&gt;3)-N-acetyl-beta-D-glucosaminyl-(1-&gt;3)-beta-D-galactosyl-(1-&gt;4)-beta-D-glucosyl-(1&lt;-&gt;1')-N-acylsphing-4-enine + GDP + H(+). It catalyses the reaction a ganglioside GD1b + GDP-beta-L-fucose = a ganglioside Fuc-GD1b + GDP + H(+). The catalysed reaction is a ganglioside GM1 (d18:1(4E)) + GDP-beta-L-fucose = a ganglioside Fuc-GM1 (d18:1(4E)) + GDP + H(+). The enzyme catalyses a globoside GalGb4Cer (d18:1(4E)) + GDP-beta-L-fucose = a globoside Globo-H (d18:1(4E)) + GDP + H(+). It carries out the reaction a lactoside III(4)-a-Fuc-Lc4Cer + GDP-beta-L-fucose = a lactoside IV(2),III(4)-a-[Fuc]2-Lc4Cer + GDP + H(+). It catalyses the reaction beta-D-galactosyl-(1-&gt;3)-N-acetyl-D-galactosamine + GDP-beta-L-fucose = alpha-L-fucosyl-(1-&gt;2)-beta-D-galactosyl-(1-&gt;3)-N-acetyl-D-galactosamine + GDP + H(+). Its pathway is protein modification; protein glycosylation. Its function is as follows. Catalyzes the transfer of L-fucose, from a guanosine diphosphate-beta-L-fucose, to the terminal galactose on both O- and N-linked glycans chains of cell surface glycoproteins and glycolipids and the resulting epitope regulates several processes such as cell-cell interaction including host-microbe interaction, cell surface expression and cell proliferation. Preferentially fucosylates gangliosides GA1 and GM1 in the antrum, cecum and colon and in the female reproductive organs. Fucosylated host glycoproteins or glycolipids mediate interaction with intestinal microbiota influencing its composition. Creates a soluble precursor oligosaccharide FuC-alpha ((1,2)Galbeta-) called the H antigen which is an essential substrate for the final step in the soluble ABO blood group antigen synthesis pathway. The polypeptide is Galactoside alpha-(1,2)-fucosyltransferase 2 (Sus scrofa (Pig)).